Reading from the N-terminus, the 544-residue chain is Chaperonin GroEL (544 aa).

ATP-binding positions include 29 to 32 (TLGP), 86 to 90 (DGTTT), G413, 476 to 478 (NAA), and D492.

The protein belongs to the chaperonin (HSP60) family. As to quaternary structure, forms a cylinder of 14 subunits composed of two heptameric rings stacked back-to-back. Interacts with the co-chaperonin GroES.

The protein resides in the cytoplasm. It localises to the secreted. It carries out the reaction ATP + H2O + a folded polypeptide = ADP + phosphate + an unfolded polypeptide.. In terms of biological role, together with its co-chaperonin GroES, plays an essential role in assisting protein folding. The GroEL-GroES system forms a nano-cage that allows encapsulation of the non-native substrate proteins and provides a physical environment optimized to promote and accelerate protein folding. This is Chaperonin GroEL from Bacillus subtilis (strain 168).